Reading from the N-terminus, the 254-residue chain is Galactitol 2-dehydrogenase (L-tagatose-forming) (254 aa).

Residues 21–23, aspartate 42, 66–67, tyrosine 159, lysine 163, and 192–194 each bind NAD(+); these read SGI, DV, and VAT. The Proton acceptor role is filled by tyrosine 159. Tryptophan 254 is a binding site for Mg(2+).

Belongs to the short-chain dehydrogenases/reductases (SDR) family. Homotetramer. Requires a divalent metal cation as cofactor.

It catalyses the reaction galactitol + NAD(+) = keto-L-tagatose + NADH + H(+). With respect to regulation, inhibited by the chelating agents EDTA and alpha,alpha'-dipyridyl. Inhibited by Zn(2+) and Fe(2+). Functionally, catalyzes the interconversion of galactitol to the rare sugar L-tagatose. Shows activity with a wide range of substrates, and catalyzes the oxidation of a variety of polyvalent aliphatic alcohols and polyols to the corresponding ketones and ketoses, respectively, and in the reverse reaction, it reduces ketones with high stereoselectivity yielding the corresponding S-configurated alcohols. Shows high activity with D-threitol, xylitol, 1,2-hexanediol, 1,2-pentanediol, 2-hexanol, L-erythrulose, D-ribulose and acetoin. Specific for NAD(+). This Cereibacter sphaeroides (Rhodobacter sphaeroides) protein is Galactitol 2-dehydrogenase (L-tagatose-forming).